Consider the following 114-residue polypeptide: Iron-sulfur cluster insertion protein ErpA (114 aa).

3 residues coordinate iron-sulfur cluster: C42, C106, and C108.

It belongs to the HesB/IscA family. Homodimer. Iron-sulfur cluster is required as a cofactor.

Required for insertion of 4Fe-4S clusters for at least IspG. The chain is Iron-sulfur cluster insertion protein ErpA from Klebsiella pneumoniae (strain 342).